We begin with the raw amino-acid sequence, 426 residues long: MGNCLDSSAKVDSSSHSPHANSASLSSRVSSKTSRSTVPSSLSINSYSSVESLPTPRTEGEILSSPNLKAFTFNELKNATRNFRPDSLLGEGGFGYVFKGWIDGTTLTASKPGSGIVVAVKKLKTEGYQGHKEWLTEVNYLGQLSHPNLVKLVGYCVEGENRLLVYEFMPKGSLENHLFRRGAQPLTWAIRMKVAIGAAKGLTFLHDAKSQVIYRDFKAANILLDAEFNSKLSDFGLAKAGPTGDKTHVSTQVMGTHGYAAPEYVATGRLTAKSDVYSFGVVLLELLSGRRAVDKSKVGMEQSLVDWATPYLGDKRKLFRIMDTRLGGQYPQKGAYTAASLALQCLNPDAKLRPKMSEVLAKLDQLESTKPGTGVGNRQAQIDSPRGSNGSIVQKSPRRYSYDRPLLHITPGASPLPTHNHSPRVR.

Residues 1–42 are disordered; the sequence is MGNCLDSSAKVDSSSHSPHANSASLSSRVSSKTSRSTVPSSL. Gly-2 carries N-myristoyl glycine lipidation. The S-palmitoyl cysteine moiety is linked to residue Cys-4. Residues 7–42 show a composition bias toward low complexity; the sequence is SSAKVDSSSHSPHANSASLSSRVSSKTSRSTVPSSL. Thr-72 bears the Phosphothreonine mark. The 284-residue stretch at 83–366 folds into the Protein kinase domain; that stretch reads FRPDSLLGEG…SEVLAKLDQL (284 aa). Residues 89 to 97 and Lys-121 each bind ATP; that span reads LGEGGFGYV. Tyr-166 is subject to Phosphotyrosine. Asp-216 functions as the Proton acceptor in the catalytic mechanism. The residue at position 250 (Ser-250) is a Phosphoserine. 2 positions are modified to phosphothreonine: Thr-251 and Thr-256. Position 264 is a phosphotyrosine (Tyr-264). Over residues 367–394 the composition is skewed to polar residues; sequence ESTKPGTGVGNRQAQIDSPRGSNGSIVQ. The disordered stretch occupies residues 367–426; that stretch reads ESTKPGTGVGNRQAQIDSPRGSNGSIVQKSPRRYSYDRPLLHITPGASPLPTHNHSPRVR.

It belongs to the protein kinase superfamily. Ser/Thr protein kinase family. In terms of assembly, interacts with the Xanthomonas campestris effector XopAC/AvrAC. In terms of tissue distribution, strongly expressed in leaves, moderately in flowers, and barely in roots.

It localises to the cell membrane. Its subcellular location is the nucleus. It carries out the reaction L-seryl-[protein] + ATP = O-phospho-L-seryl-[protein] + ADP + H(+). It catalyses the reaction L-threonyl-[protein] + ATP = O-phospho-L-threonyl-[protein] + ADP + H(+). In terms of biological role, may be involved in plant defense signaling. The chain is Probable serine/threonine-protein kinase PBL3 from Arabidopsis thaliana (Mouse-ear cress).